A 274-amino-acid polypeptide reads, in one-letter code: Energy-coupling factor transporter ATP-binding protein EcfA1 (274 aa).

Residues 9–240 (CSFINVAFSY…EQELQKIRLD (232 aa)) form the ABC transporter domain. Residue 41–48 (GHNGSGKS) participates in ATP binding.

The protein belongs to the ABC transporter superfamily. Energy-coupling factor EcfA family. In terms of assembly, forms a stable energy-coupling factor (ECF) transporter complex composed of 2 membrane-embedded substrate-binding proteins (S component), 2 ATP-binding proteins (A component) and 2 transmembrane proteins (T component).

The protein localises to the cell membrane. In terms of biological role, ATP-binding (A) component of a common energy-coupling factor (ECF) ABC-transporter complex. Unlike classic ABC transporters this ECF transporter provides the energy necessary to transport a number of different substrates. This Mycoplasma genitalium (strain ATCC 33530 / DSM 19775 / NCTC 10195 / G37) (Mycoplasmoides genitalium) protein is Energy-coupling factor transporter ATP-binding protein EcfA1.